Reading from the N-terminus, the 270-residue chain is MASACASSTIAAVAFSSPSSRRNGSIVGTTKASFLGGRRLRVSKYSTTPTARSATTVCVAADPDRPLWFPGSTPPPWLDGSLPGDFGFDPLGLASDPESLRWNQQAELVHCRWAMLGAAGIFIPELLTKIGILNTPSWYTAGEQEYFTDTTTLFIVELVLIGWAEGRRWADIIKPGCVNTDPIFPNNKLTGTDVGYPGGLWFDPLGWGSGSPAKIKELRTKEIKNGRLAMLAVMGAWFQHIYTGTGPIDNLFAHLADPGHATIFAAFSPK.

A chloroplast-targeting transit peptide spans 1-42 (MASACASSTIAAVAFSSPSSRRNGSIVGTTKASFLGGRRLRV). Residue Trp68 coordinates chlorophyll b. Phe88, Glu107, and His110 together coordinate chlorophyll a. Arg112 is a chlorophyll b binding site. A helical transmembrane segment spans residues 113-133 (WAMLGAAGIFIPELLTKIGIL). Gln144 contacts chlorophyll a. Residues 146–166 (YFTDTTTLFIVELVLIGWAEG) traverse the membrane as a helical segment. Ile155, Glu165, and Arg168 together coordinate chlorophyll b. Residues Lys221, Glu222, Asn225, Arg227, Gln239, and His254 each coordinate chlorophyll a. Residues 228–248 (LAMLAVMGAWFQHIYTGTGPI) traverse the membrane as a helical segment.

Belongs to the light-harvesting chlorophyll a/b-binding (LHC) protein family. As to quaternary structure, the LHC complex consists of chlorophyll a-b binding proteins. Binds at least 14 chlorophylls (8 Chl-a and 6 Chl-b) and carotenoids such as lutein and neoxanthin. is required as a cofactor. Photoregulated by reversible phosphorylation of its threonine residues.

It is found in the plastid. Its subcellular location is the chloroplast thylakoid membrane. Its function is as follows. The light-harvesting complex (LHC) functions as a light receptor, it captures and delivers excitation energy to photosystems with which it is closely associated. The polypeptide is Chlorophyll a-b binding protein 7, chloroplastic (CAB7) (Solanum lycopersicum (Tomato)).